We begin with the raw amino-acid sequence, 427 residues long: Serine hydroxymethyltransferase (427 aa).

120 to 122 (GHI) is a binding site for (6S)-5,6,7,8-tetrahydrofolate. Lys-226 carries the post-translational modification N6-(pyridoxal phosphate)lysine.

This sequence belongs to the SHMT family. Homodimer. It depends on pyridoxal 5'-phosphate as a cofactor.

Its subcellular location is the cytoplasm. It participates in amino-acid biosynthesis; glycine biosynthesis; glycine from L-serine: step 1/1. Catalyzes the reversible interconversion of serine and glycine with a modified folate serving as the one-carbon carrier. Also exhibits a pteridine-independent aldolase activity toward beta-hydroxyamino acids, producing glycine and aldehydes, via a retro-aldol mechanism. The sequence is that of Serine hydroxymethyltransferase from Pyrococcus furiosus (strain ATCC 43587 / DSM 3638 / JCM 8422 / Vc1).